The chain runs to 170 residues: Cytochrome b6-f complex subunit 4 (170 aa).

The next 3 membrane-spanning stretches (helical) occupy residues 46–66 (LLFM…GLAV), 105–125 (LLGI…PFIE), and 141–161 (TVFL…TLPL).

This sequence belongs to the cytochrome b family. PetD subfamily. The 4 large subunits of the cytochrome b6-f complex are cytochrome b6, subunit IV (17 kDa polypeptide, PetD), cytochrome f and the Rieske protein, while the 4 small subunits are PetG, PetL, PetM and PetN. The complex functions as a dimer.

It localises to the cellular thylakoid membrane. In terms of biological role, component of the cytochrome b6-f complex, which mediates electron transfer between photosystem II (PSII) and photosystem I (PSI), cyclic electron flow around PSI, and state transitions. This chain is Cytochrome b6-f complex subunit 4, found in Synechococcus sp. (strain JA-3-3Ab) (Cyanobacteria bacterium Yellowstone A-Prime).